We begin with the raw amino-acid sequence, 168 residues long: MSLTTYPHIYKKEQILKLKRLNKLSNDRKFFFSSVKGTLPGIISHCNNINEILGRCYLGICKLNSFFGLSKDPSDKLSVSKSPSVYTLPSKIFKEGGGNGDNTTTQTDILKNAQDQVILSKKIDELQTQVKELSSKIEPEPLTKEDIKKTYETLSRIESGLKGIIGIE.

The protein belongs to the caulimoviridae ORF II family.

Its function is as follows. This protein is involved in virus transmission. The sequence is that of Aphid transmission protein from Carnation etched ring virus (CERV).